A 305-amino-acid chain; its full sequence is MILVTGGAGFIGSHIVDKLIENNYDVIILDNLTTGNKNNINPKAEFVNADIRDKDLDEKINFKDVEVVIHQAAQINVRNSVENPVYDGDINVLGTINILEMMRKYDIDKIVFASSGGAVYGEPNYLPVDENHPINPLSPYGLSKYVGEEYIKLYNRLYGIEYAILRYSNVYGERQDPKGEAGVISIFIDKMLKNQSPIIFGDGNQTRDFVYVGDVAKANLMALNWKNEIVNIGTGKETSVNELFDIIKHEIGFRGEAIYDKPREGEVYRIYLDIKKAESLGWKPEIDLKEGIKRVVNWMKNNNRT.

Residues 10 to 11, 30 to 35, 50 to 51, and 71 to 75 contribute to the NAD(+) site; these read FI, DNLTTG, DI, and QAAQI. Ser115 and Tyr140 together coordinate substrate. NAD(+) contacts are provided by Tyr140 and Lys144. The active-site Proton acceptor is Tyr140. Substrate is bound by residues Asn169, 183-184, 198-200, Arg207, and 263-266; these read VI, IIF, and REGE.

It belongs to the NAD(P)-dependent epimerase/dehydratase family. NAD(+) serves as cofactor.

It carries out the reaction UDP-alpha-D-glucose = UDP-alpha-D-galactose. The protein operates within carbohydrate metabolism; galactose metabolism. In terms of biological role, involved in the metabolism of galactose. Catalyzes the conversion of UDP-galactose (UDP-Gal) to UDP-glucose (UDP-Glc) through a mechanism involving the transient reduction of NAD. The chain is Putative UDP-glucose 4-epimerase from Methanocaldococcus jannaschii (strain ATCC 43067 / DSM 2661 / JAL-1 / JCM 10045 / NBRC 100440) (Methanococcus jannaschii).